The following is a 100-amino-acid chain: Large ribosomal subunit protein eL21 (100 aa).

Belongs to the eukaryotic ribosomal protein eL21 family.

The chain is Large ribosomal subunit protein eL21 from Pyrobaculum arsenaticum (strain DSM 13514 / JCM 11321 / PZ6).